The primary structure comprises 250 residues: DNA repair protein RecO (250 aa).

Belongs to the RecO family.

Involved in DNA repair and RecF pathway recombination. In Lactobacillus helveticus (strain DPC 4571), this protein is DNA repair protein RecO.